The sequence spans 55 residues: Large ribosomal subunit protein bL33A (55 aa).

It belongs to the bacterial ribosomal protein bL33 family.

The chain is Large ribosomal subunit protein bL33A from Mycolicibacterium vanbaalenii (strain DSM 7251 / JCM 13017 / BCRC 16820 / KCTC 9966 / NRRL B-24157 / PYR-1) (Mycobacterium vanbaalenii).